Reading from the N-terminus, the 358-residue chain is Regulatory protein E2 (358 aa).

Positions M1–S199 are transactivation domain. The tract at residues L224–S255 is disordered. Over residues P246 to S255 the composition is skewed to polar residues. Positions T281 to L358 are DNA-binding domain. Residue K288 forms a Glycyl lysine isopeptide (Lys-Gly) (interchain with G-Cter in SUMO) linkage.

This sequence belongs to the papillomaviridae E2 protein family. Binds DNA as homodimer. Interacts with protein E1; this interaction greatly increases E1 DNA-binding activity. Interacts with protein L1; this interaction enhances E2-dependent replication and transcription activation. Interacts with protein L2; this interaction inhibits E2 transcriptional activity but not DNA replication function E2. Interacts with protein E7; this interaction inhibits E7 oncogenic activity. Interacts with host TAF1; this interaction modulates E2-dependent transcriptional regulation. Interacts with host BRD4; this interaction mediates E2 transcriptional activation function. Additionally, the interaction with host BRD4 on mitotic chromosomes mediates tethering of the viral genome. Interacts with host TOPBP1; this interaction is required for optimal viral DNA replication. Phosphorylated. In terms of processing, sumoylation plays a regulatory role in E2 transcriptional activity.

Its subcellular location is the host nucleus. Plays a role in the initiation of viral DNA replication. A dimer of E2 interacts with a dimer of E1 in order to improve specificity of E1 DNA binding activity. Once the complex recognizes and binds DNA at specific sites, the E2 dimer is removed from DNA. E2 also regulates viral transcription through binding to the E2RE response element (5'-ACCNNNNNNGGT-3') present in multiple copies in the regulatory regions of the viral genome. Activates or represses transcription depending on E2RE's position with regards to proximal promoter elements including the TATA-box. Repression occurs by sterically hindering the assembly of the transcription initiation complex. In Human papillomavirus 51, this protein is Regulatory protein E2.